The following is a 320-amino-acid chain: MVSRTERKQHKKRRKWPFWLGGILLVLLLLISGGIFLIYNQVGAVVDTMHSPLSRDSDPDRQKEINQLYKEKDAVNILLLGVDERDGDLGRSDTMILLSINPNTDKMIMLSIPRDTYVNIPGRGMDKINHAYPFGIVDGVGGPDLSVQTVEETFNLSIHSYIRVNMEGFQQGIDAVGGVTVNNAQAFSTGGYNFDQGQITLDGKQALEFIRMRKQDSRGDLGRNDRQRQVIQAAMNEAASFSSITKAGEILDILGNNVQTDLDMDKLQTLLTNYAGARNNITTMEIEGHGETINGIWYYIVSDEEINRVNSEITGHMQEQ.

Topologically, residues 1-15 (MVSRTERKQHKKRRK) are cytoplasmic. A helical; Signal-anchor for type II membrane protein transmembrane segment spans residues 16–36 (WPFWLGGILLVLLLLISGGIF). Over 37 to 320 (LIYNQVGAVV…SEITGHMQEQ (284 aa)) the chain is Extracellular.

This sequence belongs to the LytR/CpsA/Psr (LCP) family.

It localises to the cell membrane. Its pathway is cell wall biogenesis. Its function is as follows. May catalyze the final step in cell wall teichoic acid biosynthesis, the transfer of the anionic cell wall polymers (APs) from their lipid-linked precursor to the cell wall peptidoglycan (PG). The polypeptide is Polyisoprenyl-teichoic acid--peptidoglycan teichoic acid transferase TagU (Oceanobacillus iheyensis (strain DSM 14371 / CIP 107618 / JCM 11309 / KCTC 3954 / HTE831)).